The primary structure comprises 290 residues: Ribosomal RNA small subunit methyltransferase H (290 aa).

Residues Gly35–His37, Asp54, Phe81, Asp97, and Gln104 each bind S-adenosyl-L-methionine.

The protein belongs to the methyltransferase superfamily. RsmH family.

It localises to the cytoplasm. It catalyses the reaction cytidine(1402) in 16S rRNA + S-adenosyl-L-methionine = N(4)-methylcytidine(1402) in 16S rRNA + S-adenosyl-L-homocysteine + H(+). Its function is as follows. Specifically methylates the N4 position of cytidine in position 1402 (C1402) of 16S rRNA. In Picosynechococcus sp. (strain ATCC 27264 / PCC 7002 / PR-6) (Agmenellum quadruplicatum), this protein is Ribosomal RNA small subunit methyltransferase H.